The chain runs to 228 residues: MTKSHLLKYLLTSPNLPVGGFCYSEGMESYLHNKNLNDSNSVKELIISELKIGQIRLDAKLLLDFFDIFNEINDGKNAKSNLQKLLSLNKWILSSKDSIEMREQQTQMAKSLFDLTKEFGFEYLYENNKKSSWPLAWSWACFCFEITKIEMVENFFYAWSANQLSAALRIIPIGSTKTQLIQRDLLAIISKVSKEIMDKQIDDIYFGNVGLAMAQQNHNDLYTKLFRN.

This sequence belongs to the UreF family. UreD, UreF and UreG form a complex that acts as a GTP-hydrolysis-dependent molecular chaperone, activating the urease apoprotein by helping to assemble the nickel containing metallocenter of UreC. The UreE protein probably delivers the nickel.

It localises to the cytoplasm. Its function is as follows. Required for maturation of urease via the functional incorporation of the urease nickel metallocenter. The chain is Urease accessory protein UreF from Prochlorococcus marinus (strain MIT 9312).